Consider the following 313-residue polypeptide: Beta-lactamase (313 aa).

The signal sequence occupies residues 1–15; sequence MQRIGVTDYTILGTV. Residue serine 190 is the Acyl-ester intermediate of the active site.

Belongs to the class-C beta-lactamase family.

It carries out the reaction a beta-lactam + H2O = a substituted beta-amino acid. Upon expression in E.coli enables the latter to utilize penicillin as a carbon source. The sequence is that of Beta-lactamase (penA) from Burkholderia multivorans (strain ATCC 17616 / 249).